Consider the following 465-residue polypeptide: Tetratricopeptide repeat protein 38 (465 aa).

TPR repeat units lie at residues 104-137 (REQLHVSAVEMFAKGNFPRACDLWEQILRDHPTD), 176-209 (SYVKGIYSFGLMETNFYDQAQKLAKEALSIEPTD), and 248-281 (CHNYWHWALYLIEKGDYEAALTIYDSHILPSLQA).

This sequence belongs to the TTC38 family.

This Mus musculus (Mouse) protein is Tetratricopeptide repeat protein 38 (Ttc38).